The chain runs to 56 residues: Large ribosomal subunit protein bL32c (56 aa).

This sequence belongs to the bacterial ribosomal protein bL32 family.

It localises to the plastid. The protein resides in the chloroplast. The chain is Large ribosomal subunit protein bL32c from Huperzia lucidula (Shining clubmoss).